Reading from the N-terminus, the 438-residue chain is UDP-N-acetylmuramoylalanine--D-glutamate ligase (438 aa).

Residue 112–118 (GSNGKST) coordinates ATP.

This sequence belongs to the MurCDEF family.

Its subcellular location is the cytoplasm. It carries out the reaction UDP-N-acetyl-alpha-D-muramoyl-L-alanine + D-glutamate + ATP = UDP-N-acetyl-alpha-D-muramoyl-L-alanyl-D-glutamate + ADP + phosphate + H(+). Its pathway is cell wall biogenesis; peptidoglycan biosynthesis. Functionally, cell wall formation. Catalyzes the addition of glutamate to the nucleotide precursor UDP-N-acetylmuramoyl-L-alanine (UMA). The sequence is that of UDP-N-acetylmuramoylalanine--D-glutamate ligase from Salmonella typhi.